The following is a 472-amino-acid chain: Glutamate--tRNA ligase 2 (472 aa).

The 'HIGH' region motif lies at 10–20; the sequence is PSPTGYLHIGG. Positions 99, 101, 126, and 128 each coordinate Zn(2+). Residues 112-130 show a composition bias toward basic and acidic residues; sequence EQQARKEKPRYDGRCRDLD. The interval 112–137 is disordered; sequence EQQARKEKPRYDGRCRDLDGPPSEEV. The 'KMSKS' region motif lies at 240-244; the sequence is RLSKR. Lys-243 contributes to the ATP binding site.

The protein belongs to the class-I aminoacyl-tRNA synthetase family. Glutamate--tRNA ligase type 1 subfamily. Monomer. Zn(2+) is required as a cofactor.

It localises to the cytoplasm. It carries out the reaction tRNA(Glu) + L-glutamate + ATP = L-glutamyl-tRNA(Glu) + AMP + diphosphate. Its function is as follows. Catalyzes the attachment of glutamate to tRNA(Glu) in a two-step reaction: glutamate is first activated by ATP to form Glu-AMP and then transferred to the acceptor end of tRNA(Glu). The polypeptide is Glutamate--tRNA ligase 2 (Halorhodospira halophila (strain DSM 244 / SL1) (Ectothiorhodospira halophila (strain DSM 244 / SL1))).